The sequence spans 237 residues: ATP-dependent dethiobiotin synthetase BioD (237 aa).

Position 21–26 (21–26 (GVGKTV)) interacts with ATP. Residue Thr-25 participates in Mg(2+) binding. Lys-48 is a catalytic residue. Thr-52 lines the substrate pocket. ATP is bound by residues Asp-56, 117-120 (EALG), 177-178 (SC), and 209-211 (PYL). The Mg(2+) site is built by Asp-56 and Glu-117.

Belongs to the dethiobiotin synthetase family. In terms of assembly, homodimer. Mg(2+) serves as cofactor.

It localises to the cytoplasm. It carries out the reaction (7R,8S)-7,8-diammoniononanoate + CO2 + ATP = (4R,5S)-dethiobiotin + ADP + phosphate + 3 H(+). It catalyses the reaction (7R,8S)-8-amino-7-(carboxyamino)nonanoate + ATP = (4R,5S)-dethiobiotin + ADP + phosphate + H(+). It functions in the pathway cofactor biosynthesis; biotin biosynthesis; biotin from 7,8-diaminononanoate: step 1/2. In terms of biological role, catalyzes a mechanistically unusual reaction, the ATP-dependent insertion of CO2 between the N7 and N8 nitrogen atoms of 7,8-diaminopelargonic acid (DAPA, also called 7,8-diammoniononanoate) to form a ureido ring. This cyanobacterium does not encode bioA (which catalyzes the formation of the precursor for this reaction in the cannonical pathway), instead it encodes bioU, which replaces bioA and also performs the first half of the cannonical BioD reaction. Thus in this bacteria BioD has a different substrate. In Synechocystis replacement of bioU by bioA from E.coli leads to biotin synthesis, showing BioD can use the 'cannonical' 7,8-diammoniononanoate as a substrate. The polypeptide is ATP-dependent dethiobiotin synthetase BioD (Synechocystis sp. (strain ATCC 27184 / PCC 6803 / Kazusa)).